A 106-amino-acid polypeptide reads, in one-letter code: Phosphoribosyl-ATP pyrophosphatase (106 aa).

The protein belongs to the PRA-PH family.

It is found in the cytoplasm. It catalyses the reaction 1-(5-phospho-beta-D-ribosyl)-ATP + H2O = 1-(5-phospho-beta-D-ribosyl)-5'-AMP + diphosphate + H(+). It participates in amino-acid biosynthesis; L-histidine biosynthesis; L-histidine from 5-phospho-alpha-D-ribose 1-diphosphate: step 2/9. The polypeptide is Phosphoribosyl-ATP pyrophosphatase (Rhizorhabdus wittichii (strain DSM 6014 / CCUG 31198 / JCM 15750 / NBRC 105917 / EY 4224 / RW1) (Sphingomonas wittichii)).